We begin with the raw amino-acid sequence, 349 residues long: Ferredoxin--NADP reductase 1 (349 aa).

Glutamate 36, lysine 44, tyrosine 48, valine 88, leucine 123, aspartate 290, and serine 331 together coordinate FAD.

The protein belongs to the ferredoxin--NADP reductase type 2 family. Homodimer. It depends on FAD as a cofactor.

The catalysed reaction is 2 reduced [2Fe-2S]-[ferredoxin] + NADP(+) + H(+) = 2 oxidized [2Fe-2S]-[ferredoxin] + NADPH. The protein is Ferredoxin--NADP reductase 1 of Lysinibacillus sphaericus (strain C3-41).